We begin with the raw amino-acid sequence, 644 residues long: Cell pattern formation-associated protein StuA (644 aa).

Over residues 18 to 33 the composition is skewed to low complexity; sequence ATAHAPASAAPSGISH. Disordered stretches follow at residues 18 to 58 and 86 to 120; these read ATAH…PGYP and QLPA…APPG. Over residues 38-47 the composition is skewed to polar residues; it reads PQSSMMQPGQ. A compositionally biased stretch (low complexity) spans 87–104; that stretch reads LPAMSSSGPSPSLSGAQS. Residues 124–230 form the HTH APSES-type domain; that stretch reads RVTATLWEDE…HDIGALLYHP (107 aa). The segment at residues 158-179 is a DNA-binding region (H-T-H motif); the sequence is GTKLLNVAGMTRGRRDGILKSE. A disordered region spans residues 239–644; sequence GSAAMAAVDR…HTMTAQRARR (406 aa). Positions 253-269 are enriched in polar residues; the sequence is SMQTQRYISGPTTSQPP. Residues 315–328 are compositionally biased toward low complexity; sequence SASSIMGMSNSGSS. Polar residues-rich tracts occupy residues 334–357, 371–383, and 395–404; these read ANVQ…TRSV, QAIS…SYDN, and PGQYNTQGQS. The span at 456–465 shows a compositional bias: basic and acidic residues; sequence EGDHEHDNEY. The segment covering 509–524 has biased composition (low complexity); the sequence is GSGRATPRTTTTSQTQ. Residues 525-544 are compositionally biased toward polar residues; sequence WNSGYPTPQRQGPPSSNLYN. Residues 584-612 form a nuclear localization domain region; sequence KRGRDDDDEDPYRPDSVQSDDMGGLKRRK. The segment covering 635–644 has biased composition (polar residues); it reads HTMTAQRARR.

It belongs to the EFG1/PHD1/stuA family.

It is found in the nucleus. Its function is as follows. Transcription factor that regulates asexual reproduction. Binds the StuA-response elements (StRE) with the consensus sequence 5'-(A/T)CGCG(T/A)N(A/C)-3' at the promoters of target genes. Required for pathogenicity and positively regulates the synthesis of the mycotoxin alternariol. Acts as a positive regulator of Tox3 but is not required for the expression of ToxA. Also acts as a central regulator of carbon metabolism including glycolysis, the TCA cycle, and amino acid synthesis. The chain is Cell pattern formation-associated protein StuA from Phaeosphaeria nodorum (strain SN15 / ATCC MYA-4574 / FGSC 10173) (Glume blotch fungus).